Reading from the N-terminus, the 350-residue chain is MSKNKLSKGQQRRVNANHQRRLKTSKEKPDYDDNLFGEPDEGIVISRFGMHADVESADGDVHRCNIRRTIRSLVTGDRVVWRPGKPAAEGVNVKGIVEAVHERTSVLTRPDFYDGVKPIAANIDQIVIVSAILPELSLNIIDRYLVACETLQIEPIIVLNKIDLLDDEGMAFVNEQMDIYRNIGYRVLMVSSHTQDGLKPLAEALTGRISIFAGQSGVGKSSLLNALLGLQKEILTNDVSDNSGLGQHTTTAARLYHFPHGGDVIDSPGVREFGLWHLEPEQITQGFVEFHDYLGLCKYRDCKHDTDPGCAIREAVEEGKIAETRFENYHRILESMAQVKTRKNFSDTDD.

The segment covering 1–17 has biased composition (polar residues); it reads MSKNKLSKGQQRRVNAN. Positions 1-33 are disordered; the sequence is MSKNKLSKGQQRRVNANHQRRLKTSKEKPDYDD. Residues 104 to 273 enclose the CP-type G domain; it reads TSVLTRPDFY…VIDSPGVREF (170 aa). Residues 160–163 and 214–222 each bind GTP; these read NKID and GQSGVGKSS. Positions 297, 302, 304, and 310 each coordinate Zn(2+).

It belongs to the TRAFAC class YlqF/YawG GTPase family. RsgA subfamily. In terms of assembly, monomer. Associates with 30S ribosomal subunit, binds 16S rRNA. The cofactor is Zn(2+).

Its subcellular location is the cytoplasm. In terms of biological role, one of several proteins that assist in the late maturation steps of the functional core of the 30S ribosomal subunit. Helps release RbfA from mature subunits. May play a role in the assembly of ribosomal proteins into the subunit. Circularly permuted GTPase that catalyzes slow GTP hydrolysis, GTPase activity is stimulated by the 30S ribosomal subunit. The chain is Small ribosomal subunit biogenesis GTPase RsgA from Shigella flexneri.